The chain runs to 501 residues: 2-isopropylmalate synthase (501 aa).

The Pyruvate carboxyltransferase domain occupies 7-269 (VRIFDTTLRD…QTQIKTEEIA (263 aa)). Mn(2+) is bound by residues D16, H204, H206, and N240. The tract at residues 394-501 (QLEGFTVSTG…RAYISALNRL (108 aa)) is regulatory domain.

The protein belongs to the alpha-IPM synthase/homocitrate synthase family. LeuA type 1 subfamily. As to quaternary structure, homodimer. It depends on Mn(2+) as a cofactor.

Its subcellular location is the cytoplasm. The enzyme catalyses 3-methyl-2-oxobutanoate + acetyl-CoA + H2O = (2S)-2-isopropylmalate + CoA + H(+). It functions in the pathway amino-acid biosynthesis; L-leucine biosynthesis; L-leucine from 3-methyl-2-oxobutanoate: step 1/4. In terms of biological role, catalyzes the condensation of the acetyl group of acetyl-CoA with 3-methyl-2-oxobutanoate (2-ketoisovalerate) to form 3-carboxy-3-hydroxy-4-methylpentanoate (2-isopropylmalate). The sequence is that of 2-isopropylmalate synthase from Leptospira interrogans serogroup Icterohaemorrhagiae serovar copenhageni (strain Fiocruz L1-130).